The primary structure comprises 171 residues: MISQLRTLWIVLKHTFSRADTVQYPEQRPKLYPRYRGRIVLTRDPDGEERCVACNLCAAVCPVDCIALQKTEDVDGRWYPEFFRINFSRCILCGLCEEACPTYAIQLTPDFELCEYDRRNLVYEKEHLLIQGTGKYPGYSFYRVAGKAIAGKDKGQAENEAPPIDVHSLLP.

2 consecutive 4Fe-4S ferredoxin-type domains span residues 41 to 71 and 81 to 110; these read LTRD…LQKT and EFFR…LTPD. Residues C51, C54, C57, C61, C90, C93, C96, and C100 each contribute to the [4Fe-4S] cluster site.

The protein belongs to the complex I 23 kDa subunit family. In terms of assembly, NDH-1 is composed of 14 different subunits. Subunits NuoA, H, J, K, L, M, N constitute the membrane sector of the complex. [4Fe-4S] cluster is required as a cofactor.

The protein localises to the cell inner membrane. The catalysed reaction is a quinone + NADH + 5 H(+)(in) = a quinol + NAD(+) + 4 H(+)(out). In terms of biological role, NDH-1 shuttles electrons from NADH, via FMN and iron-sulfur (Fe-S) centers, to quinones in the respiratory chain. The immediate electron acceptor for the enzyme in this species is believed to be ubiquinone. Couples the redox reaction to proton translocation (for every two electrons transferred, four hydrogen ions are translocated across the cytoplasmic membrane), and thus conserves the redox energy in a proton gradient. The chain is NADH-quinone oxidoreductase subunit I from Methylococcus capsulatus (strain ATCC 33009 / NCIMB 11132 / Bath).